A 258-amino-acid chain; its full sequence is Small ribosomal subunit protein uS2 (258 aa).

The interval 226 to 258 is disordered; it reads KQGQDDEETLEVDFKENADGSEEIVSAEENPED. Residues 244 to 258 are compositionally biased toward acidic residues; that stretch reads DGSEEIVSAEENPED.

This sequence belongs to the universal ribosomal protein uS2 family.

This is Small ribosomal subunit protein uS2 from Lactobacillus acidophilus (strain ATCC 700396 / NCK56 / N2 / NCFM).